A 590-amino-acid chain; its full sequence is MMRSHYCGVLNRTHVGEQVTLSGWVHRVRNLGRFIFMQIRDREGIVQVFFDEKDEALFKQASALRAEACVQIKGEVIARDTSQINKEMATGEIEVLVKELVVYNNSEVLPLDFNQNNTEEQRLKYRYLDLRRPEMAERLKTRAKITSFVRRYMDDNGFLDIETPMLTKATPEGARDYLVPSRVHKGKFYALPQSPQLFKQLLMMSGFDRYYQIAKCFRDEDLRADRQPEFTQIDVETTFMTAPEVRAMMEKMIRGLWLDRLNVDLGEFPQMTFAEAMRRYGSDKPDLRNPLELVDVADILKDVEFKVFSGPANDPEGRVAVIRVPNGAEITRKQIDEYTQFVGNYGAKGLAWAKVNDVNAGLEGLQSPIAKFLTDDVVKALLARVNAQNGDIIFFGADSEKVVTDAMGALRLKVGRDLGLTDLTAWKPLWVVDFPMFEKDDEGNWSAMHHPFTAPKDLSPEELVQNPKGAVANAYDMVINGYEVGGGSVRIFDPKMQQTVFGILGINEEEQKEKFGFLLDALKFGTPPHAGLAFGLDRLTMLITGTENIRDVIAFPKTTAAACLMTDAPSFGNPKALAELAIQTTVEKES.

Glutamate 172 serves as a coordination point for L-aspartate. Positions 196–199 (QLFK) are aspartate. Arginine 218 lines the L-aspartate pocket. ATP contacts are provided by residues 218 to 220 (RDE) and glutamine 227. Histidine 449 contacts L-aspartate. An ATP-binding site is contributed by glutamate 483. Residue arginine 490 participates in L-aspartate binding. An ATP-binding site is contributed by 535 to 538 (GLDR).

The protein belongs to the class-II aminoacyl-tRNA synthetase family. Type 1 subfamily. Homodimer.

The protein resides in the cytoplasm. It carries out the reaction tRNA(Asp) + L-aspartate + ATP = L-aspartyl-tRNA(Asp) + AMP + diphosphate. Functionally, catalyzes the attachment of L-aspartate to tRNA(Asp) in a two-step reaction: L-aspartate is first activated by ATP to form Asp-AMP and then transferred to the acceptor end of tRNA(Asp). The protein is Aspartate--tRNA ligase of Glaesserella parasuis serovar 5 (strain SH0165) (Haemophilus parasuis).